The sequence spans 658 residues: UvrABC system protein C (658 aa).

The GIY-YIG domain maps to 62–140 (PKPGVYRMLD…IKRFRPPYNV (79 aa)). Positions 250–285 (GAVQREIEAQMHKAAEDLDFERAAMLRDRLRAATFI) constitute a UVR domain.

The protein belongs to the UvrC family. As to quaternary structure, interacts with UvrB in an incision complex.

It is found in the cytoplasm. Its function is as follows. The UvrABC repair system catalyzes the recognition and processing of DNA lesions. UvrC both incises the 5' and 3' sides of the lesion. The N-terminal half is responsible for the 3' incision and the C-terminal half is responsible for the 5' incision. This is UvrABC system protein C from Novosphingobium aromaticivorans (strain ATCC 700278 / DSM 12444 / CCUG 56034 / CIP 105152 / NBRC 16084 / F199).